A 669-amino-acid polypeptide reads, in one-letter code: DNA ligase (669 aa).

NAD(+) contacts are provided by residues 31–35 (DAEYD), 80–81 (SL), and E112. K114 functions as the N6-AMP-lysine intermediate in the catalytic mechanism. 4 residues coordinate NAD(+): R135, E172, K289, and K313. Zn(2+) is bound by residues C407, C410, C425, and C431. One can recognise a BRCT domain in the interval 591–669 (SVPQPLADKV…EEQLIEILNN (79 aa)).

This sequence belongs to the NAD-dependent DNA ligase family. LigA subfamily. Mg(2+) serves as cofactor. Mn(2+) is required as a cofactor.

The enzyme catalyses NAD(+) + (deoxyribonucleotide)n-3'-hydroxyl + 5'-phospho-(deoxyribonucleotide)m = (deoxyribonucleotide)n+m + AMP + beta-nicotinamide D-nucleotide.. Its function is as follows. DNA ligase that catalyzes the formation of phosphodiester linkages between 5'-phosphoryl and 3'-hydroxyl groups in double-stranded DNA using NAD as a coenzyme and as the energy source for the reaction. It is essential for DNA replication and repair of damaged DNA. This Aliivibrio salmonicida (strain LFI1238) (Vibrio salmonicida (strain LFI1238)) protein is DNA ligase.